The primary structure comprises 384 residues: Sodium channel protein Nach (384 aa).

Residues 1–319 (AAFAYFSGFM…LVSHLGSAFS (319 aa)) lie on the Extracellular side of the membrane. Residues Asn32 and Asn215 are each glycosylated (N-linked (GlcNAc...) asparagine). A helical transmembrane segment spans residues 320–340 (LFVGMSMLSLVEIIYYFTVIL). Over 341–384 (RRNYVQECRARQKLQTLHRRPNFGWPGDKNSNQQKSVFYIRGRN) the chain is Cytoplasmic.

It belongs to the amiloride-sensitive sodium channel (TC 1.A.6) family.

The protein localises to the membrane. Part of a complex that plays a role in tracheal liquid clearance. Probable role in sodium transport. This chain is Sodium channel protein Nach (Nach), found in Drosophila virilis (Fruit fly).